A 156-amino-acid chain; its full sequence is Small ribosomal subunit protein uS7 (156 aa).

It belongs to the universal ribosomal protein uS7 family. As to quaternary structure, part of the 30S ribosomal subunit. Contacts proteins S9 and S11.

In terms of biological role, one of the primary rRNA binding proteins, it binds directly to 16S rRNA where it nucleates assembly of the head domain of the 30S subunit. Is located at the subunit interface close to the decoding center, probably blocks exit of the E-site tRNA. This is Small ribosomal subunit protein uS7 from Actinobacillus pleuropneumoniae serotype 5b (strain L20).